Here is an 893-residue protein sequence, read N- to C-terminus: Nitrate reductase [NADPH] (893 aa).

The disordered stretch occupies residues 1 to 83; sequence MSVTTQQPAV…KPTPDAHVPR (83 aa). The span at 55 to 65 shows a compositional bias: pro residues; it reads PDFPLPPPANP. The segment covering 71-83 has biased composition (basic and acidic residues); the sequence is DIDKPTPDAHVPR. Cys-170 contacts Mo-molybdopterin. The region spanning 536–611 is the Cytochrome b5 heme-binding domain; the sequence is NRIVELDELK…MPAYHIGTLS (76 aa). His-571 and His-594 together coordinate heme. One can recognise an FAD-binding FR-type domain in the interval 641–752; sequence RTWSKALLSS…KGPIGKFEYL (112 aa). Residues 695-698, 712-716, 726-728, Ser-776, and Thr-779 contribute to the FAD site; these read RSYT, LIKIY, and KMT. Residue 863–872 participates in NADP(+) binding; the sequence is LVLVCGPEGL.

This sequence belongs to the nitrate reductase family. In terms of assembly, homodimer. The cofactor is FAD. It depends on heme as a cofactor. Requires Mo-molybdopterin as cofactor.

The enzyme catalyses nitrite + NADP(+) + H2O = nitrate + NADPH + H(+). In terms of biological role, nitrate reductase is a key enzyme involved in the first step of nitrate assimilation in plants, fungi and bacteria. The polypeptide is Nitrate reductase [NADPH] (NIAD) (Leptosphaeria maculans (Blackleg fungus)).